A 242-amino-acid polypeptide reads, in one-letter code: Protein GrpE (242 aa).

Disordered regions lie at residues 1 to 75 and 93 to 136; these read MSDD…DDEL and VADL…QQIK. Over residues 23 to 37 the composition is skewed to low complexity; sequence DAESSAAEDASAADD. Acidic residues predominate over residues 38–49; the sequence is AAPEESTGDEQA. Over residues 50–64 the composition is skewed to polar residues; that stretch reads GETTAESSDAESVTV. A compositionally biased stretch (acidic residues) spans 96–108; sequence LETERDEAEETAS. The segment covering 124-133 has biased composition (basic residues); that stretch reads YKKRAKKRQQ.

This sequence belongs to the GrpE family. Homodimer.

Its subcellular location is the cytoplasm. In terms of biological role, participates actively in the response to hyperosmotic and heat shock by preventing the aggregation of stress-denatured proteins, in association with DnaK and GrpE. It is the nucleotide exchange factor for DnaK and may function as a thermosensor. Unfolded proteins bind initially to DnaJ; upon interaction with the DnaJ-bound protein, DnaK hydrolyzes its bound ATP, resulting in the formation of a stable complex. GrpE releases ADP from DnaK; ATP binding to DnaK triggers the release of the substrate protein, thus completing the reaction cycle. Several rounds of ATP-dependent interactions between DnaJ, DnaK and GrpE are required for fully efficient folding. The protein is Protein GrpE of Haloferax mediterranei (strain ATCC 33500 / DSM 1411 / JCM 8866 / NBRC 14739 / NCIMB 2177 / R-4) (Halobacterium mediterranei).